The chain runs to 316 residues: Glycerol-3-phosphate dehydrogenase [NAD(P)+] (316 aa).

Residues Ser-14, Phe-15, Arg-35, and Lys-109 each contribute to the NADPH site. Sn-glycerol 3-phosphate contacts are provided by Lys-109 and Gly-137. Ala-141 provides a ligand contact to NADPH. 5 residues coordinate sn-glycerol 3-phosphate: Lys-192, Asp-248, Ser-258, Arg-259, and Asn-260. Lys-192 serves as the catalytic Proton acceptor. Arg-259 is a binding site for NADPH. Positions 283 and 285 each coordinate NADPH.

Belongs to the NAD-dependent glycerol-3-phosphate dehydrogenase family.

Its subcellular location is the cytoplasm. It catalyses the reaction sn-glycerol 3-phosphate + NAD(+) = dihydroxyacetone phosphate + NADH + H(+). It carries out the reaction sn-glycerol 3-phosphate + NADP(+) = dihydroxyacetone phosphate + NADPH + H(+). It participates in membrane lipid metabolism; glycerophospholipid metabolism. Its function is as follows. Catalyzes the reduction of the glycolytic intermediate dihydroxyacetone phosphate (DHAP) to sn-glycerol 3-phosphate (G3P), the key precursor for phospholipid synthesis. The chain is Glycerol-3-phosphate dehydrogenase [NAD(P)+] from Rickettsia prowazekii (strain Madrid E).